The chain runs to 266 residues: 4-hydroxy-tetrahydrodipicolinate reductase (266 aa).

Residues 8–13 (GAAGRM) and Glu-33 contribute to the NAD(+) site. Arg-34 is an NADP(+) binding site. Residues 97–99 (GST) and 121–124 (APNM) contribute to the NAD(+) site. The Proton donor/acceptor role is filled by His-154. His-155 lines the (S)-2,3,4,5-tetrahydrodipicolinate pocket. Catalysis depends on Lys-158, which acts as the Proton donor. Position 164–165 (164–165 (GT)) interacts with (S)-2,3,4,5-tetrahydrodipicolinate.

This sequence belongs to the DapB family.

The protein localises to the cytoplasm. It carries out the reaction (S)-2,3,4,5-tetrahydrodipicolinate + NAD(+) + H2O = (2S,4S)-4-hydroxy-2,3,4,5-tetrahydrodipicolinate + NADH + H(+). The catalysed reaction is (S)-2,3,4,5-tetrahydrodipicolinate + NADP(+) + H2O = (2S,4S)-4-hydroxy-2,3,4,5-tetrahydrodipicolinate + NADPH + H(+). The protein operates within amino-acid biosynthesis; L-lysine biosynthesis via DAP pathway; (S)-tetrahydrodipicolinate from L-aspartate: step 4/4. Catalyzes the conversion of 4-hydroxy-tetrahydrodipicolinate (HTPA) to tetrahydrodipicolinate. This Geobacter sulfurreducens (strain ATCC 51573 / DSM 12127 / PCA) protein is 4-hydroxy-tetrahydrodipicolinate reductase.